The sequence spans 650 residues: Fructose-1,6-bisphosphatase class 3 (650 aa).

Belongs to the FBPase class 3 family. Requires Mn(2+) as cofactor.

It carries out the reaction beta-D-fructose 1,6-bisphosphate + H2O = beta-D-fructose 6-phosphate + phosphate. Its pathway is carbohydrate biosynthesis; gluconeogenesis. This Staphylococcus saprophyticus subsp. saprophyticus (strain ATCC 15305 / DSM 20229 / NCIMB 8711 / NCTC 7292 / S-41) protein is Fructose-1,6-bisphosphatase class 3.